The primary structure comprises 289 residues: 4-diphosphocytidyl-2-C-methyl-D-erythritol kinase (289 aa).

Residue lysine 15 is part of the active site. ATP is bound at residue 100-110 (PVSAGLAGGSA). Residue aspartate 140 is part of the active site.

It belongs to the GHMP kinase family. IspE subfamily.

The catalysed reaction is 4-CDP-2-C-methyl-D-erythritol + ATP = 4-CDP-2-C-methyl-D-erythritol 2-phosphate + ADP + H(+). It participates in isoprenoid biosynthesis; isopentenyl diphosphate biosynthesis via DXP pathway; isopentenyl diphosphate from 1-deoxy-D-xylulose 5-phosphate: step 3/6. Catalyzes the phosphorylation of the position 2 hydroxy group of 4-diphosphocytidyl-2C-methyl-D-erythritol. The chain is 4-diphosphocytidyl-2-C-methyl-D-erythritol kinase from Anaplasma marginale (strain Florida).